Here is a 130-residue protein sequence, read N- to C-terminus: Small ribosomal subunit protein uS9 (130 aa).

Belongs to the universal ribosomal protein uS9 family.

The chain is Small ribosomal subunit protein uS9 from Bacillus mycoides (strain KBAB4) (Bacillus weihenstephanensis).